Reading from the N-terminus, the 565-residue chain is Heme/hemopexin transporter protein HuxB (565 aa).

A signal peptide spans 1-26 (MKMRPRYSVIASAVSLGFVLSKSVMA). The region spanning 73-150 (FPLTQVQILD…GTVKILLLKG (78 aa)) is the POTRA domain.

This sequence belongs to the TPS (TC 1.B.20) family.

The protein resides in the cell outer membrane. Its function is as follows. Likely functions in the release of soluble HxuA from the cell. Functionally, probable member of a two partner secretion pathway (TPS) in which it mediates the secretion of HuxA. This chain is Heme/hemopexin transporter protein HuxB (hxuB), found in Haemophilus influenzae (strain 86-028NP).